We begin with the raw amino-acid sequence, 397 residues long: tRNA(Met) cytidine acetate ligase (397 aa).

Residues Val-7–His-20, Gly-101, Asn-152, and Arg-177 each bind ATP.

The protein belongs to the TmcAL family.

The protein localises to the cytoplasm. It catalyses the reaction cytidine(34) in elongator tRNA(Met) + acetate + ATP = N(4)-acetylcytidine(34) in elongator tRNA(Met) + AMP + diphosphate. Functionally, catalyzes the formation of N(4)-acetylcytidine (ac(4)C) at the wobble position of elongator tRNA(Met), using acetate and ATP as substrates. First activates an acetate ion to form acetyladenylate (Ac-AMP) and then transfers the acetyl group to tRNA to form ac(4)C34. The sequence is that of tRNA(Met) cytidine acetate ligase from Leuconostoc citreum (strain KM20).